The primary structure comprises 247 residues: Cationic trypsin-3 (247 aa).

The N-terminal stretch at 1-15 (MKALIFLAFLGAAVA) is a signal peptide. A propeptide spans 16 to 24 (LPLDDDDDK) (activation peptide). In terms of domain architecture, Peptidase S1 spans 25–245 (IVGGYTCQKN…YVNWIQQTVA (221 aa)). 6 disulfide bridges follow: Cys-31–Cys-161, Cys-49–Cys-65, Cys-133–Cys-234, Cys-140–Cys-207, Cys-172–Cys-186, and Cys-197–Cys-221. His-64 functions as the Charge relay system in the catalytic mechanism. Glu-76, Asn-78, Val-81, and Glu-86 together coordinate Ca(2+). Asp-108 acts as the Charge relay system in catalysis. Residue Ser-201 is the Charge relay system of the active site.

It belongs to the peptidase S1 family. Ca(2+) serves as cofactor.

Its subcellular location is the secreted. The protein localises to the extracellular space. The catalysed reaction is Preferential cleavage: Arg-|-Xaa, Lys-|-Xaa.. The chain is Cationic trypsin-3 (Try3) from Rattus norvegicus (Rat).